The chain runs to 100 residues: Large ribosomal subunit protein uL23 (100 aa).

Belongs to the universal ribosomal protein uL23 family. Part of the 50S ribosomal subunit. Contacts protein L29, and trigger factor when it is bound to the ribosome.

In terms of biological role, one of the early assembly proteins it binds 23S rRNA. One of the proteins that surrounds the polypeptide exit tunnel on the outside of the ribosome. Forms the main docking site for trigger factor binding to the ribosome. The protein is Large ribosomal subunit protein uL23 of Prochlorococcus marinus (strain MIT 9215).